The following is a 335-amino-acid chain: MRIVINGFGRIGRLVLRQILKRNAPIEVVAINDLVSGDLLTYLFKYDSTHGSFASQATFSDGCLVVGERKIRFLAEKDVQKLPWKDLDVDVVVESTGLFVNKDDAAKHLDSGAKRVLITAPAKGDVPTFVMGVNHQKFDPANDVIISNASCTTNCLAPLAKVLLDNFGIEEGLMTTVHAATATQSVVDGPSRKDWRGGRGAFQNIIPASTGAAKAVGLCLPELKGKLTGMAFRVPVADVSVVDLTVKLSSATTYEAVCEAVKHAASTSMRNIMHYTEEAVVSSDFIGCEYSSVFDAQAGVALNDRFFKLIAWYDNEIGYATRIVDLLEYIQGNSK.

NAD(+)-binding positions include 10 to 11 (RI), aspartate 33, lysine 77, and threonine 119. D-glyceraldehyde 3-phosphate-binding positions include 150–152 (SCT), threonine 181, 210–211 (TG), and arginine 233. The Nucleophile role is filled by cysteine 151. NAD(+) is bound at residue asparagine 315.

The protein belongs to the glyceraldehyde-3-phosphate dehydrogenase family. As to quaternary structure, homotetramer.

The protein localises to the cytoplasm. The enzyme catalyses D-glyceraldehyde 3-phosphate + phosphate + NAD(+) = (2R)-3-phospho-glyceroyl phosphate + NADH + H(+). It participates in carbohydrate degradation; glycolysis; pyruvate from D-glyceraldehyde 3-phosphate: step 1/5. Functionally, catalyzes the oxidative phosphorylation of glyceraldehyde 3-phosphate (G3P) to 1,3-bisphosphoglycerate (BPG) using the cofactor NAD. The first reaction step involves the formation of a hemiacetal intermediate between G3P and a cysteine residue, and this hemiacetal intermediate is then oxidized to a thioester, with concomitant reduction of NAD to NADH. The reduced NADH is then exchanged with the second NAD, and the thioester is attacked by a nucleophilic inorganic phosphate to produce BPG. The protein is Glyceraldehyde-3-phosphate dehydrogenase (gap) of Chlamydia muridarum (strain MoPn / Nigg).